The chain runs to 405 residues: Interferon alpha/beta receptor 1a (405 aa).

Positions 1–20 (MKVGFALVLLWSLPITNVLA) are cleaved as a signal peptide. Topologically, residues 21-233 (ELPQPQNLTL…QTEGDTPYGQ (213 aa)) are extracellular. Fibronectin type-III domains lie at 22 to 123 (LPQP…IDAS) and 126 to 228 (PPSR…TEGD). Residues asparagine 27 and asparagine 70 are each glycosylated (N-linked (GlcNAc...) asparagine). Cystine bridges form between cysteine 75/cysteine 83 and cysteine 201/cysteine 222. Asparagine 212 carries N-linked (GlcNAc...) asparagine glycosylation. Residues 234 to 254 (IFLYFLVSMMVCFLLVLLSSY) form a helical membrane-spanning segment. Residues 255-405 (AFFRFYRGLK…LDEGVVDICV (151 aa)) are Cytoplasmic-facing. Positions 325–374 (TAPPSELEQDSGRRIRQDSGDSGIYSTEGGSAQQGRSGGEPIRRDQEVDS) are disordered. Residues 334-343 (DSGRRIRQDS) are compositionally biased toward basic and acidic residues. The span at 348–359 (IYSTEGGSAQQG) shows a compositional bias: polar residues.

Belongs to the type II cytokine receptor family. Heterodimer with IFNAR2; forming the receptor for type I interferon.

Its subcellular location is the cell membrane. Together with IFNAR2, forms the heterodimeric receptor for type I interferons (including interferons alpha, beta, epsilon, omega and kappa). Type I interferon binding activates the JAK-STAT signaling cascade, resulting in transcriptional activation or repression of interferon-regulated genes that encode the effectors of the interferon response. Mechanistically, type I interferon-binding brings the IFNAR1 and IFNAR2 subunits into close proximity with one another, driving their associated Janus kinases (JAKs) (TYK2 bound to IFNAR1 and JAK1 bound to IFNAR2) to cross-phosphorylate one another. The activated kinases phosphorylate specific tyrosine residues on the intracellular domains of IFNAR1 and IFNAR2, forming docking sites for the STAT transcription factors. STAT proteins are then phosphorylated by the JAKs, promoting their translocation into the nucleus to regulate expression of interferon-regulated genes. In Oncorhynchus mykiss (Rainbow trout), this protein is Interferon alpha/beta receptor 1a.